The sequence spans 269 residues: Formamidopyrimidine-DNA glycosylase (269 aa).

Proline 2 acts as the Schiff-base intermediate with DNA in catalysis. Glutamate 3 serves as the catalytic Proton donor. Lysine 57 acts as the Proton donor; for beta-elimination activity in catalysis. Residues histidine 90, arginine 109, and lysine 150 each coordinate DNA. The segment at 235-269 adopts an FPG-type zinc-finger fold; it reads QVYGKAGESCPECGEAIQELKIGQRNTFYCSYCQC. Catalysis depends on arginine 259, which acts as the Proton donor; for delta-elimination activity.

It belongs to the FPG family. As to quaternary structure, monomer. Requires Zn(2+) as cofactor.

It carries out the reaction Hydrolysis of DNA containing ring-opened 7-methylguanine residues, releasing 2,6-diamino-4-hydroxy-5-(N-methyl)formamidopyrimidine.. The catalysed reaction is 2'-deoxyribonucleotide-(2'-deoxyribose 5'-phosphate)-2'-deoxyribonucleotide-DNA = a 3'-end 2'-deoxyribonucleotide-(2,3-dehydro-2,3-deoxyribose 5'-phosphate)-DNA + a 5'-end 5'-phospho-2'-deoxyribonucleoside-DNA + H(+). Its function is as follows. Involved in base excision repair of DNA damaged by oxidation or by mutagenic agents. Acts as a DNA glycosylase that recognizes and removes damaged bases. Has a preference for oxidized purines, such as 7,8-dihydro-8-oxoguanine (8-oxoG). Has AP (apurinic/apyrimidinic) lyase activity and introduces nicks in the DNA strand. Cleaves the DNA backbone by beta-delta elimination to generate a single-strand break at the site of the removed base with both 3'- and 5'-phosphates. The protein is Formamidopyrimidine-DNA glycosylase of Vibrio vulnificus (strain YJ016).